The sequence spans 119 residues: Protein TusC (119 aa).

Belongs to the DsrF/TusC family. Heterohexamer, formed by a dimer of trimers. The hexameric TusBCD complex contains 2 copies each of TusB, TusC and TusD. The TusBCD complex interacts with TusE.

It localises to the cytoplasm. In terms of biological role, part of a sulfur-relay system required for 2-thiolation of 5-methylaminomethyl-2-thiouridine (mnm(5)s(2)U) at tRNA wobble positions. The sequence is that of Protein TusC from Citrobacter koseri (strain ATCC BAA-895 / CDC 4225-83 / SGSC4696).